Reading from the N-terminus, the 28-residue chain is MVEYLVILSGMFGLALACFFGLRSIKLI.

The helical transmembrane segment at 2-22 (VEYLVILSGMFGLALACFFGL) threads the bilayer.

It belongs to the PetL family. As to quaternary structure, the 4 large subunits of the cytochrome b6-f complex are cytochrome b6, subunit IV (17 kDa polypeptide, PetD), cytochrome f and the Rieske protein, while the 4 small subunits are PetG, PetL, PetM and PetN. The complex functions as a dimer.

It localises to the plastid. Its subcellular location is the cyanelle thylakoid membrane. Functionally, component of the cytochrome b6-f complex, which mediates electron transfer between photosystem II (PSII) and photosystem I (PSI), cyclic electron flow around PSI, and state transitions. PetL is important for photoautotrophic growth as well as for electron transfer efficiency and stability of the cytochrome b6-f complex. The protein is Cytochrome b6-f complex subunit 6 of Cyanophora paradoxa.